A 249-amino-acid polypeptide reads, in one-letter code: MVNKSQVLLDIANKKAIKVISGLTNLNYEHVLTIARASQRACVSYIDIAADPQLVKVVKANVNIPICVSGLEIQPIYNAVLAGADLIEVGNYESLYKRNTVLSVCKIITLVEEIKKLCPRVPLTVTIPYILNQKDQINLCKQLESLRVDYIQTEGNSISKCKNHCVQDLLRLSLQTLACTYELVKHTQLPIICSSGLSDVTVPLAFSLGASGIGIGKFVTSYYEEEKIVSILSKIKKIVSGTRSYQACE.

This sequence belongs to the ycf23 family.

Its subcellular location is the plastid. The protein resides in the chloroplast. This is an uncharacterized protein from Cyanidium caldarium (Red alga).